The chain runs to 326 residues: Glyoxylate/hydroxypyruvate reductase B (326 aa).

Catalysis depends on residues arginine 237 and glutamate 266. Residue histidine 285 is the Proton donor of the active site.

The protein belongs to the D-isomer specific 2-hydroxyacid dehydrogenase family. GhrB subfamily. Homodimer.

The protein resides in the cytoplasm. The enzyme catalyses glycolate + NADP(+) = glyoxylate + NADPH + H(+). It carries out the reaction (R)-glycerate + NAD(+) = 3-hydroxypyruvate + NADH + H(+). It catalyses the reaction (R)-glycerate + NADP(+) = 3-hydroxypyruvate + NADPH + H(+). Functionally, catalyzes the NADPH-dependent reduction of glyoxylate and hydroxypyruvate into glycolate and glycerate, respectively. This is Glyoxylate/hydroxypyruvate reductase B from Yersinia pestis bv. Antiqua (strain Nepal516).